The primary structure comprises 401 residues: MALRVTRNRLASTRAEQGGKTCSVSGPTLKPRAALGEIGNVAANKDVTKKNVKMEAAKKTRITAKAEKIEQPKATVVPVKPEPKVQVPAQPEPASPTPMETSGCEPADLCQAFSDVILNTAIRDVDADDYDNPMLCSEYVKDIYKYLRQLEVEQSVKPNYLQGQEVTGNMRAILIDWLVQVNLKFRLLQETMYMTVGIIDRFLQDHPVPKKQLQLVGVTAMFLASKYEEMYPPEISDFAYVTDRAYTTAQIRDMEMTILRVLKFQLGRPLPLQFLRRASKIYEVTAEQHTLAKYLLELSIVDYDMAHFPPSTVASAALGLTLKVLDAGEWDVTLQHYMDYTAHTLTPVMAHIAKNVVKVNDGLTKHMAIKGKYSTSKQMRVATIAQLKSSLVKDLAKQLSQ.

Disordered regions lie at residues 1-30 (MALRVTRNRLASTRAEQGGKTCSVSGPTLK) and 84-103 (KVQVPAQPEPASPTPMETSG). Over residues 9–26 (RLASTRAEQGGKTCSVSG) the composition is skewed to polar residues.

Belongs to the cyclin family. Cyclin AB subfamily. In terms of assembly, interacts with the CDK1 protein kinase to form a serine/threonine kinase holoenzyme complex also known as maturation promoting factor (MPF). The cyclin subunit imparts substrate specificity to the complex.

Functionally, essential for the control of the cell cycle at the G2/M (mitosis) transition. The sequence is that of G2/mitotic-specific cyclin-B1 (ccnb1) from Oryzias javanicus (Javanese ricefish).